A 748-amino-acid chain; its full sequence is MEDVRRRNRGHPLLRSKKRGEGYNHGFSPSQIQSLAVICQTFLPPETTSEQQAVNSFHVASSTQPPFTDEVAEMIVKNGRSEAVKVLRIILMILSFRFGTLLLCGSLCLDKSWPFVLKFSQLPLDKREAILRNWSRQSGFLLPFRITFFLAKFYTLFYFFSQTDENLKNPALEAIGYCIDGTERSSNKKSEADEKRRPLEKGIIETMHESDVTITQSLTEKGVHVARDDGDNVYRIRCDAVVVGSGSGGGVAAANLAKAGLKVLVLEKGNYFTAHDYSGLEVPSMLELYEKGGLLTTVDGKFMLLAGSAVGGGTAVNWSASIRTPDHVLQEWSEGSKIKFFGSQEYQSAMDEVTIRIGVTERCVKHGFQNQVLRKGCERLGLQVESVPRNSPEDHYCGLCGYGCRAGAKNGTDQTWLVDAVENGAVILTGIKAERFVLVDNTSSSNERKKRCVGVFASSVGGKIGKKFIIEARVTVSSAGSLLTPPLMLSSGLKNPNIGRNLKLHPVLMTWGYFPEKDSEFSGKMYEGGIITSVHHMNDTESGCKAILENPLIGPASYAGLSPWVSGPDLKERMIKYGRTAHLFALVRDLGSGEVMMENEVTYRTTKKDRENLRAGLRQALRVSVAAGAVEVGTYRSDGQKMKCEAITKEAMEEFLDEVDAVGGVGTKGEYWTTYFSAHQMGSCRMGVTAEEGALDENGESWEAEGLFVCDGSILPSAVGVNPMITIQSTAYCISSKIVDSLQNKTKV.

Over residues 1–18 (MEDVRRRNRGHPLLRSKK) the composition is skewed to basic residues. The tract at residues 1–25 (MEDVRRRNRGHPLLRSKKRGEGYNH) is disordered. 2 consecutive transmembrane segments (helical) span residues 89–109 (IILMILSFRFGTLLLCGSLCL) and 140–160 (FLLPFRITFFLAKFYTLFYFF). 238 to 253 (CDAVVVGSGSGGGVAA) is a binding site for FAD. Catalysis depends on His-679, which acts as the Proton acceptor.

Belongs to the GMC oxidoreductase family.

Its subcellular location is the membrane. It carries out the reaction a long-chain primary fatty alcohol + O2 = a long-chain fatty aldehyde + H2O2. In terms of biological role, long-chain fatty alcohol oxidase involved in the omega-oxidation pathway of lipid degradation. This Arabidopsis thaliana (Mouse-ear cress) protein is Long-chain-alcohol oxidase FAO4B (FAO4B).